Reading from the N-terminus, the 200-residue chain is MARCKS-related protein (200 aa).

Residues 1-200 (MGSQSSKAPR…PTPASAEQNE (200 aa)) form a disordered region. A lipid anchor (N-myristoyl glycine) is attached at Gly2. At Thr14 the chain carries Phosphothreonine. Over residues 16–26 (EEAAGASPAKA) the composition is skewed to low complexity. Phosphoserine is present on residues Ser22, Ser36, and Ser48. Positions 53–64 (GTDEAAGATGDA) are enriched in low complexity. Ser71 carries the post-translational modification Phosphoserine. Positions 74 to 85 (AEAKGEVAPKET) are enriched in basic and acidic residues. Thr85 bears the Phosphothreonine mark. Basic residues predominate over residues 86–98 (PKKKKKFSFKKPF). The effector domain involved in lipid-binding and calmodulin-binding stretch occupies residues 87 to 110 (KKKKKFSFKKPFKLSGLSFKRNRK). A phosphoserine; by PKC mark is found at Ser93, Ser101, and Ser104. The residue at position 119 (Ser119) is a Phosphoserine. Ser120 is modified (phosphoserine; by MAPK8). A phosphoserine mark is found at Ser132 and Ser135. Position 148 is a phosphothreonine; by MAPK8 (Thr148). A phosphoserine mark is found at Ser151, Ser162, and Ser165. Residues 156 to 165 (AKGAEASAAS) show a composition bias toward low complexity. Residue Thr170 is modified to Phosphothreonine. Residues 178–200 (AAEPSTPSGPESGPTPASAEQNE) show a composition bias toward low complexity. Residue Thr183 is modified to Phosphothreonine; by MAPK8. The residue at position 192 (Thr192) is a Phosphothreonine.

Belongs to the MARCKS family. In terms of assembly, binds to filamentous actin (F-actin), but not to monomeric G-actin, independently of its phosphorylation status. Interacts with calmodulin. Phosphorylated. Phosphorylation at Ser-120 and Thr-183 is non-redundantly catalyzed by MAPK8 in vivo. Phosphorylation at Thr-148 is preferentially catalyzed by MAPK8 in vivo, but this modification can also be catalyzed by other kinases in the absence of MAPK8. May be phosphorylated by protein kinase C, which disrupts the interaction with calmodulin. As to expression, expressed at high levels in brain cortex and hippocampus, including dentate gyrus, anterior olfactory nucleus, primary olfactory cortex, entorhinal cortex, medial preoptic area and dorsomedial hypothalamic nucleus (at protein level). Expressed in neuronal cells (at protein level). Detected in the retina. Strongly expressed in testis and uterus; expressed at lower levels in cerebellum, cerebrum, adipose tissue, spleen, kidney, thyroid, liver, lung, skeletal muscle and heart. Detected in T-cells and B-cells.

It is found in the cytoplasm. The protein localises to the cytoskeleton. Its subcellular location is the cell membrane. Involved in the control of cell movement by regulating actin cytoskeleton homeostasis and filopodium and lamellipodium formation. When unphosphorylated, induces cell migration. When phosphorylated by MAPK8, induces actin bundles formation and stabilization, thereby reducing actin plasticity, hence restricting cell movement, including neuronal migration. May be involved in coupling the protein kinase C and calmodulin signal transduction systems. This chain is MARCKS-related protein (Marcksl1), found in Mus musculus (Mouse).